A 294-amino-acid chain; its full sequence is 4-hydroxy-tetrahydrodipicolinate synthase (294 aa).

Thr47 is a binding site for pyruvate. The active-site Proton donor/acceptor is the Tyr135. The Schiff-base intermediate with substrate role is filled by Lys163. A pyruvate-binding site is contributed by Ile205.

Belongs to the DapA family. As to quaternary structure, homotetramer; dimer of dimers.

The protein localises to the cytoplasm. The enzyme catalyses L-aspartate 4-semialdehyde + pyruvate = (2S,4S)-4-hydroxy-2,3,4,5-tetrahydrodipicolinate + H2O + H(+). The protein operates within amino-acid biosynthesis; L-lysine biosynthesis via DAP pathway; (S)-tetrahydrodipicolinate from L-aspartate: step 3/4. In terms of biological role, catalyzes the condensation of (S)-aspartate-beta-semialdehyde [(S)-ASA] and pyruvate to 4-hydroxy-tetrahydrodipicolinate (HTPA). The chain is 4-hydroxy-tetrahydrodipicolinate synthase from Rickettsia prowazekii (strain Madrid E).